The sequence spans 114 residues: Hemerythrin subunit 2 (114 aa).

Residues H26, H55, E59, H74, H78, H102, and D107 each contribute to the Fe cation site.

This sequence belongs to the hemerythrin family.

Its function is as follows. Hemerythrin is a respiratory protein in blood cells of certain marine worms. The oxygen-binding site in each chain contains two iron atoms. The sequence is that of Hemerythrin subunit 2 from Golfingia vulgaris (Marine worm).